The primary structure comprises 469 residues: 3-isopropylmalate dehydratase large subunit (469 aa).

Residues C350, C410, and C413 each coordinate [4Fe-4S] cluster.

It belongs to the aconitase/IPM isomerase family. LeuC type 1 subfamily. In terms of assembly, heterodimer of LeuC and LeuD. It depends on [4Fe-4S] cluster as a cofactor.

It catalyses the reaction (2R,3S)-3-isopropylmalate = (2S)-2-isopropylmalate. It functions in the pathway amino-acid biosynthesis; L-leucine biosynthesis; L-leucine from 3-methyl-2-oxobutanoate: step 2/4. Functionally, catalyzes the isomerization between 2-isopropylmalate and 3-isopropylmalate, via the formation of 2-isopropylmaleate. The sequence is that of 3-isopropylmalate dehydratase large subunit from Sinorhizobium fredii (strain NBRC 101917 / NGR234).